The chain runs to 129 residues: Azurin-2 (129 aa).

The 129-residue stretch at 1–129 folds into the Plastocyanin-like domain; that stretch reads AQCEATVESN…MMKGTLKLGS (129 aa). An intrachain disulfide couples C3 to C26. H46, C112, H117, and M121 together coordinate Cu cation.

It localises to the periplasm. Its function is as follows. Transfers electrons from cytochrome c551 to cytochrome oxidase. The protein is Azurin-2 of Alcaligenes xylosoxydans xylosoxydans (Achromobacter xylosoxidans).